Here is a 463-residue protein sequence, read N- to C-terminus: Argininosuccinate lyase (463 aa).

This sequence belongs to the lyase 1 family. Argininosuccinate lyase subfamily.

The protein localises to the cytoplasm. It carries out the reaction 2-(N(omega)-L-arginino)succinate = fumarate + L-arginine. The protein operates within amino-acid biosynthesis; L-arginine biosynthesis; L-arginine from L-ornithine and carbamoyl phosphate: step 3/3. This chain is Argininosuccinate lyase, found in Methylorubrum populi (strain ATCC BAA-705 / NCIMB 13946 / BJ001) (Methylobacterium populi).